A 534-amino-acid chain; its full sequence is GPI transamidase component GPI17 (534 aa).

Residues 1–8 (MSNANLRK) lie on the Cytoplasmic side of the membrane. The chain crosses the membrane as a helical span at residues 9-29 (WVGFCFVAIYLFLGVPLWYKL). Residues 30–472 (TTVYRASLPI…VQQNFFPQEH (443 aa)) lie on the Lumenal side of the membrane. Residues asparagine 100, asparagine 170, asparagine 228, asparagine 247, and asparagine 299 are each glycosylated (N-linked (GlcNAc...) asparagine). Residues 473–493 (MIAVYLPLLGPISAVMFFGFY) form a helical membrane-spanning segment. Over 494–534 (NVMKEKNQKSKKNGTEREVAKEKLELKEAQKLHAIDGEDEL) the chain is Cytoplasmic.

It belongs to the PIGS family. As to quaternary structure, forms a complex with CDC91, GPI16, GPI8 and GAA1. N-glycosylated.

Its subcellular location is the endoplasmic reticulum membrane. Its pathway is glycolipid biosynthesis; glycosylphosphatidylinositol-anchor biosynthesis. Its function is as follows. Component of the GPI transamidase complex. Involved in transfer of GPI to proteins. In Saccharomyces cerevisiae (strain ATCC 204508 / S288c) (Baker's yeast), this protein is GPI transamidase component GPI17 (GPI17).